The primary structure comprises 91 residues: Small nuclear ribonucleoprotein F (91 aa).

The Sm domain occupies 8–81 (APKPFLYDLK…VLFVRGIDDE (74 aa)).

This sequence belongs to the snRNP Sm proteins family. SmF/LSm6 subfamily. As to quaternary structure, core component of the spliceosomal U1, U2, U4 and U5 small nuclear ribonucleoproteins (snRNPs), the building blocks of the spliceosome. Most spliceosomal snRNPs contain a common set of Sm proteins, SNRPB, SNRPD1, SNRPD2, SNRPD3, SNRPE, SNRPF and SNRPG that assemble in a heptameric protein ring on the Sm site of the small nuclear RNA to form the core snRNP. Component of the U1 snRNP. Component of the U4/U6-U5 tri-snRNP complex. Component of the U7 snRNP complex. Component of the U11/U12 snRNPs that are part of the U12-type spliceosome. Part of the SMN-Sm complex that catalyzes core snRNPs assembly.

It is found in the cytoplasm. The protein localises to the cytosol. Its subcellular location is the nucleus. Functionally, plays a role in pre-mRNA splicing as a core component of the spliceosomal U1, U2, U4 and U5 small nuclear ribonucleoproteins (snRNPs), the building blocks of the spliceosome. Component of both the pre-catalytic spliceosome B complex and activated spliceosome C complexes. Is also a component of the minor U12 spliceosome. In Dictyostelium discoideum (Social amoeba), this protein is Small nuclear ribonucleoprotein F (snrpf).